A 344-amino-acid polypeptide reads, in one-letter code: L-threonine 3-dehydrogenase (344 aa).

C38 provides a ligand contact to Zn(2+). Catalysis depends on charge relay system residues T40 and H43. The Zn(2+) site is built by H63, E64, C93, C96, C99, and C107. Residues I175, D195, R200, 263 to 265 (LGI), and 287 to 288 (IY) each bind NAD(+).

It belongs to the zinc-containing alcohol dehydrogenase family. In terms of assembly, homotetramer. Zn(2+) serves as cofactor.

It localises to the cytoplasm. It catalyses the reaction L-threonine + NAD(+) = (2S)-2-amino-3-oxobutanoate + NADH + H(+). It participates in amino-acid degradation; L-threonine degradation via oxydo-reductase pathway; glycine from L-threonine: step 1/2. In terms of biological role, catalyzes the NAD(+)-dependent oxidation of L-threonine to 2-amino-3-ketobutyrate. This chain is L-threonine 3-dehydrogenase, found in Deinococcus deserti (strain DSM 17065 / CIP 109153 / LMG 22923 / VCD115).